A 476-amino-acid chain; its full sequence is Protein EARLY HEADING DATE 2 (476 aa).

Residues 1-13 (MLLSDLSSDQEAT) are compositionally biased toward polar residues. Residues 1–27 (MLLSDLSSDQEATGSNSHGGGGGGDRM) are disordered. 2 C2H2-type zinc fingers span residues 106–128 (FVCEVCNKGFQRDQNLQLHRRGH) and 156–186 (YVCPEPTCVHHDPARALGDLTGIKKHFSRKH). Short sequence motifs (nuclear localization signal) lie at residues 124–131 (HRRGHNLP) and 178–185 (IKKHFSRK). The C2H2-type 2; degenerate zinc finger occupies 191–214 (WRCERCGKRYAVHSDWKAHVKNCG). Zn(2+) contacts are provided by C193, C196, H209, C213, C220, C222, H235, and C239. The segment at 218–241 (YRCDCGILFSRKDSLLTHRAFCDA) adopts a CCHC-type 2; atypical zinc-finger fold. An SHR-binding region spans residues 228–240 (RKDSLLTHRAFCD).

It is found in the nucleus. Transcription activator that acts as a flowering master switch in both long and short days, independently of the circadian clock. Promotes flowering upstream of HD1 by up-regulating FTL1, FTL4, FTL5, FTL6, EHD1, HD3A and RFT1. Seems to repress FTL11 expression. May recognize the consensus motif 5'-TTTGTCGTAAT-3' in target gene promoters. The protein is Protein EARLY HEADING DATE 2 of Oryza sativa subsp. indica (Rice).